A 493-amino-acid polypeptide reads, in one-letter code: Glutamyl-tRNA(Gln) amidotransferase subunit A (493 aa).

Active-site charge relay system residues include Lys-79 and Ser-159. Ser-183 acts as the Acyl-ester intermediate in catalysis.

This sequence belongs to the amidase family. GatA subfamily. Heterotrimer of A, B and C subunits.

It carries out the reaction L-glutamyl-tRNA(Gln) + L-glutamine + ATP + H2O = L-glutaminyl-tRNA(Gln) + L-glutamate + ADP + phosphate + H(+). In terms of biological role, allows the formation of correctly charged Gln-tRNA(Gln) through the transamidation of misacylated Glu-tRNA(Gln) in organisms which lack glutaminyl-tRNA synthetase. The reaction takes place in the presence of glutamine and ATP through an activated gamma-phospho-Glu-tRNA(Gln). This is Glutamyl-tRNA(Gln) amidotransferase subunit A from Sinorhizobium fredii (strain NBRC 101917 / NGR234).